The chain runs to 242 residues: MAGHSKWANIKHRKGAQDALKAKIFNKFSKEIMVAVAKGGSDPNSNPALRLIISKARAKSMPKSNIEKAIAKGEGSTSNGENFKEIIYSGTLSHGISVIVVILTDNINRAIASLQALFRRANGQIGKQNSIPYLFEQKGYLEIEKNNLDEDDLMLFCLDNGAEDFQSDGENYMIYCQPRKISELKNEIEKKFSPNFRAVEISYFPNEWVELDQENTEKILNQIDNFLDDEDIQNVYHNLKFA.

This sequence belongs to the TACO1 family.

It localises to the cytoplasm. This is Probable transcriptional regulatory protein MHP7448_0474 from Mesomycoplasma hyopneumoniae (strain 7448) (Mycoplasma hyopneumoniae).